The sequence spans 262 residues: Trypsin eta (262 aa).

The signal sequence occupies residues 1-22 (MNKVILRILAVLFLLGIYAVSA). A propeptide spans 23-27 (QSDGR) (activation peptide). The Peptidase S1 domain maps to 28-259 (IVGGADTSSY…YKDWIAKQRT (232 aa)). Cysteine 59 and cysteine 75 form a disulfide bridge. Active-site charge relay system residues include histidine 74 and aspartate 120. Disulfide bonds link cysteine 185/cysteine 200 and cysteine 211/cysteine 235. The Charge relay system role is filled by serine 215.

The protein belongs to the peptidase S1 family.

The protein localises to the secreted. The protein resides in the extracellular space. The enzyme catalyses Preferential cleavage: Arg-|-Xaa, Lys-|-Xaa.. In Drosophila melanogaster (Fruit fly), this protein is Trypsin eta (etaTry).